The chain runs to 417 residues: UDP-N-acetylglucosamine 1-carboxyvinyltransferase (417 aa).

Phosphoenolpyruvate is bound at residue Lys-22–Asn-23. A UDP-N-acetyl-alpha-D-glucosamine-binding site is contributed by Arg-91. The active-site Proton donor is the Cys-115. Cys-115 bears the 2-(S-cysteinyl)pyruvic acid O-phosphothioketal mark. UDP-N-acetyl-alpha-D-glucosamine-binding positions include Arg-120–Leu-124, Asp-304, and Ile-326.

Belongs to the EPSP synthase family. MurA subfamily.

The protein resides in the cytoplasm. It catalyses the reaction phosphoenolpyruvate + UDP-N-acetyl-alpha-D-glucosamine = UDP-N-acetyl-3-O-(1-carboxyvinyl)-alpha-D-glucosamine + phosphate. Its pathway is cell wall biogenesis; peptidoglycan biosynthesis. Its function is as follows. Cell wall formation. Adds enolpyruvyl to UDP-N-acetylglucosamine. The polypeptide is UDP-N-acetylglucosamine 1-carboxyvinyltransferase (Nitratidesulfovibrio vulgaris (strain DSM 19637 / Miyazaki F) (Desulfovibrio vulgaris)).